Reading from the N-terminus, the 1880-residue chain is Nonribosomal peptide synthetase otaB (1880 aa).

Residues Ala205–Ala594 form an adenylation 1 region. In terms of domain architecture, Carrier spans Leu728–Ala804. O-(pantetheine 4'-phosphoryl)serine is present on Ser765. Residues Glu840 to Leu1250 form a condensation region. Residues Gln1269–Arg1665 form an adenylation 2 region.

The protein belongs to the NRP synthetase family.

The catalysed reaction is 7-carboxymellein + L-phenylalanine + ATP = ochratoxin B + ADP + phosphate + H(+). It participates in mycotoxin biosynthesis. In terms of biological role, nonribosomal peptide synthetase; part of the gene cluster that mediates the biosynthesis of ochratoxin A (OTA), a mycotoxin composed of a chlorinated type I polyketide dihydroisocoumarin moiety linked to L-phenylalanine, and demonstrated to have nephrotoxic, immunotoxic, genotoxic, neurotoxic, and teratogenic properties. OtaB is responsible for the linking of phenylalanine to the dihydroisocoumarin ring. The pathway begins with the highly reducing polyketide synthase otaA that catalyzes the formation of the isocoumarin group during the initial stages of biosynthesis, starting from one acetate and 4 malonate units, to originate the characteristic pentaketide skeleton 7-methylmellein (7-MM) of the OTA molecule. The newly identified cyclase otaY might be involved in the polyketide cyclization reaction during the initial steps of the OTA biosynthesis. 7-MM is then oxidized into 7-carboxymellein (also called ochratoxin beta) by the cytochrome P450 monooxygenase otaC. The NRPS encoded by the otaB gene is involved in the linking of phenylalanine to the dihydroisocoumarin ring. The reaction catalyzed by NRPS results in the production of ochratoxin B (OTB), which is the non-chlorinated analog of OTA and which subsequently serves as the substrate of the halogenase otaD for chlorination activity to form the final molecular structure of OTA, containing a chlorine atom in the C-5 position of the molecule. In Aspergillus niger (strain ATCC MYA-4892 / CBS 513.88 / FGSC A1513), this protein is Nonribosomal peptide synthetase otaB.